The primary structure comprises 297 residues: MGDIFHIPVLLEDVINLVETIYLDDGFVFVDCTLGEGGHSKAVLSKYQNINVIGIERDDVVLNRAKESLVEFSKRISYSNTWFDDFFCKYSLHRRFNFILADLGISMFHYKVGGRGFSFLEDEKLDMRLFPSDGGISAYDIVNTFDKEMLENLIYELGGEYYSRRIVKAILEYRKINKIQTSRELQRIICKAYPNVKFKINPATKTFQALRIYVNDELDRLKRSLPLWIANLSKNGILAIITFHSLEDKIVKEFFKGLTKDQYCILTKKPITSSFKEKQYNNASRSAKLRAVKKLYE.

Residues 37 to 39, E56, F87, D102, and H109 contribute to the S-adenosyl-L-methionine site; that span reads GGH.

This sequence belongs to the methyltransferase superfamily. RsmH family.

It localises to the cytoplasm. It catalyses the reaction cytidine(1402) in 16S rRNA + S-adenosyl-L-methionine = N(4)-methylcytidine(1402) in 16S rRNA + S-adenosyl-L-homocysteine + H(+). In terms of biological role, specifically methylates the N4 position of cytidine in position 1402 (C1402) of 16S rRNA. This chain is Ribosomal RNA small subunit methyltransferase H, found in Borrelia duttonii (strain Ly).